Here is a 156-residue protein sequence, read N- to C-terminus: RNA polymerase sigma factor SigS (156 aa).

The Polymerase core binding motif lies at 29-44 (EYYQLLLIKMWQLSQI). A DNA-binding region (H-T-H motif) is located at residues 126–145 (QFEIAEIMSLSLSTIKLIKM).

This sequence belongs to the sigma-70 factor family.

Functionally, sigma factors are initiation factors that promote the attachment of RNA polymerase to specific initiation sites and are then released. Sigma-S contributes to the protection against external stress, thus playing a role in cellular fitness and survival. In Staphylococcus aureus (strain NCTC 8325 / PS 47), this protein is RNA polymerase sigma factor SigS (sigS).